A 449-amino-acid chain; its full sequence is Exodeoxyribonuclease 7 large subunit (449 aa).

It belongs to the XseA family. In terms of assembly, heterooligomer composed of large and small subunits.

Its subcellular location is the cytoplasm. It catalyses the reaction Exonucleolytic cleavage in either 5'- to 3'- or 3'- to 5'-direction to yield nucleoside 5'-phosphates.. Its function is as follows. Bidirectionally degrades single-stranded DNA into large acid-insoluble oligonucleotides, which are then degraded further into small acid-soluble oligonucleotides. The chain is Exodeoxyribonuclease 7 large subunit from Salmonella schwarzengrund (strain CVM19633).